A 530-amino-acid chain; its full sequence is Phosphoenolpyruvate carboxykinase (ATP) 2 (530 aa).

Substrate is bound by residues R54, Y191, and K197. Residues K197, H216, and 232-240 (GLSGTGKTT) contribute to the ATP site. 2 residues coordinate Mn(2+): K197 and H216. Mn(2+) is bound at residue D253. ATP-binding positions include E281, R318, 437 to 438 (RV), and T443. R318 serves as a coordination point for substrate.

It belongs to the phosphoenolpyruvate carboxykinase (ATP) family. Mn(2+) is required as a cofactor.

The protein resides in the cytoplasm. It catalyses the reaction oxaloacetate + ATP = phosphoenolpyruvate + ADP + CO2. It functions in the pathway carbohydrate biosynthesis; gluconeogenesis. Involved in the gluconeogenesis. Catalyzes the conversion of oxaloacetate (OAA) to phosphoenolpyruvate (PEP) through direct phosphoryl transfer between the nucleoside triphosphate and OAA. This Salinibacter ruber (strain DSM 13855 / M31) protein is Phosphoenolpyruvate carboxykinase (ATP) 2.